A 410-amino-acid chain; its full sequence is Lysosome-associated membrane glycoprotein 2 (410 aa).

Residues 1–28 (MMCFRLSPVSGSGLVLSCLLLGAVQSYA) form the signal peptide. Residues 29-192 (FELNLPDSKA…SKEEFVCEED (164 aa)) are first lumenal domain. The Lumenal segment spans residues 29-375 (FELNLPDSKA…QDCSADEDNF (347 aa)). Cys40 and Cys79 form a disulfide bridge. Residues Asn48, Asn58, Asn71, Asn75, Asn99, Asn119, Asn123, Asn179, Asn222, Asn229, Asn242, Asn260, Asn275, Asn300, Asn307, Asn317, and Asn356 are each glycosylated (N-linked (GlcNAc...) asparagine). Cys153 and Cys189 are disulfide-bonded. A hinge region spans residues 193 to 228 (KSVTTVRPIIHTTVPPPTTTPTPLPPKVGNYSVSNG). The interval 229–375 (NATCLLATMG…QDCSADEDNF (147 aa)) is second lumenal domain. An intrachain disulfide couples Cys232 to Cys265. Residues Cys331 and Cys368 are joined by a disulfide bond. Residues 376–399 (LVPIAVGAALAGVLALVLLAYFIG) traverse the membrane as a helical segment. Topologically, residues 400-410 (LKRHHTGYEQF) are cytoplasmic. The segment at 401–404 (KRHH) is important for binding and subsequent lysosomal degradation of target proteins.

Belongs to the LAMP family. As to quaternary structure, monomer. Forms large homooligomers. Interacts (via its cytoplasmic region) with HSPA8; HSPA8 mediates recruitment of proteins with a KFERQ motif to the surface of the lysosome for chaperone-mediated autophagy. Interacts with HSP90 in the lysosome lumen; this enhances LAMP2 stability. Interacts with MLLT11. Interacts with ABCB9. Interacts with FURIN. Interacts with CT55; this interaction may be important for LAMP2 protein stability. Interacts with TMEM175; inhibiting the proton channel activity of TMEM175. Forms a ternary complex with RAB7A and RUFY4 (via RUN domain); the interaction with RAB7A is mediated by RUFY4 (via RUN and coiled coil domains). Post-translationally, extensively N-glycosylated. Contains a minor proportion of O-linked glycans.

The protein localises to the lysosome membrane. It is found in the endosome membrane. It localises to the cell membrane. Its subcellular location is the cytoplasmic vesicle. The protein resides in the autophagosome membrane. In terms of biological role, lysosomal membrane glycoprotein which plays an important role in lysosome biogenesis, lysosomal pH regulation and autophagy. Acts as an important regulator of lysosomal lumen pH regulation by acting as a direct inhibitor of the proton channel TMEM175, facilitating lysosomal acidification for optimal hydrolase activity. Plays an important role in chaperone-mediated autophagy, a process that mediates lysosomal degradation of proteins in response to various stresses and as part of the normal turnover of proteins with a long biological half-live. Functions by binding target proteins, such as GAPDH, NLRP3 and MLLT11, and targeting them for lysosomal degradation. In the chaperone-mediated autophagy, acts downstream of chaperones, such as HSPA8/HSC70, which recognize and bind substrate proteins and mediate their recruitment to lysosomes, where target proteins bind LAMP2. Plays a role in lysosomal protein degradation in response to starvation. Required for the fusion of autophagosomes with lysosomes during autophagy. Cells that lack LAMP2 express normal levels of VAMP8, but fail to accumulate STX17 on autophagosomes, which is the most likely explanation for the lack of fusion between autophagosomes and lysosomes. Required for normal degradation of the contents of autophagosomes. Required for efficient MHC class II-mediated presentation of exogenous antigens via its function in lysosomal protein degradation; antigenic peptides generated by proteases in the endosomal/lysosomal compartment are captured by nascent MHC II subunits. Is not required for efficient MHC class II-mediated presentation of endogenous antigens. In Cricetulus griseus (Chinese hamster), this protein is Lysosome-associated membrane glycoprotein 2 (LAMP2).